The chain runs to 120 residues: PE family protein PE10 (120 aa).

Residues 29 to 59 (GQVTGNGGSGNSGTSAAAANPNSDNTASIAD) are disordered. Over residues 40–51 (SGTSAAAANPNS) the composition is skewed to low complexity.

Belongs to the mycobacterial PE family. As to quaternary structure, forms a complex with PE9. The complex interacts with human TLR4.

The protein resides in the secreted. It is found in the cell wall. In terms of biological role, together with PE9, induces macrophage apoptosis through human Toll-like receptor 4 (TLR4) signaling pathway. Interaction with TLR4 leads to increased levels of phospho-IRF-3, increase in the transcript levels of IFN-beta and pro-apoptotic genes, up-regulation of IL-10, down-regulation of IL-1b and enhanced levels of macrophage apoptosis. This chain is PE family protein PE10, found in Mycobacterium tuberculosis (strain ATCC 25618 / H37Rv).